The primary structure comprises 502 residues: Myocilin (502 aa).

Positions 1 to 31 (MPSCAYCCSCGPKMPALQLLFLACLVWGMGA) are cleaved as a signal peptide. Positions 82 to 183 (ADLESTKARV…QEVARLRRGQ (102 aa)) form a coiled coil. The segment at 166–198 (ARRLEGSSQEVARLRRGQCPSTHHPSQDMLPGS) is disordered. A glycan (N-linked (GlcNAc...) asparagine) is linked at Asn229. The region spanning 242-501 (GCGVLMWVGE…MVTYDIKLSE (260 aa)) is the Olfactomedin-like domain. Cys243 and Cys431 are disulfide-bonded. Positions 378, 426, 427, 475, and 476 each coordinate Ca(2+).

In terms of assembly, homodimer (via N-terminus). Can also form higher oligomers. Interacts with OLFM3, FN1, NRCAM, GLDN and NFASC. Interacts (via N-terminus) with MYL2. Interacts with SFRP1, FRZB, FZD7, FZD10, FZD1 and WIF1; regulates Wnt signaling. Interacts with SNTA1; regulates muscle hypertrophy. Interacts with ERBB2 and ERBB3; activates ERBB2-ERBB3 signaling pathway. Interacts with SNCG; affects its secretion and its aggregation. In terms of processing, palmitoylated. Undergoes a calcium-dependent proteolytic cleavage at Gln-225 by CAPN2 in the endoplasmic reticulum. The result is the production of two fragments, one of 35 kDa containing the C-terminal olfactomedin-like domain, and another of 20 kDa containing the N-terminal leucine zipper-like domain. Post-translationally, glycosylated. Highly expressed in skeletal muscle and retina. Also detected at lower levels in thyroid gland but not in other endocrine glands such as the adrenal or pituitary glands.

The protein localises to the secreted. Its subcellular location is the golgi apparatus. It localises to the cytoplasmic vesicle. The protein resides in the extracellular space. It is found in the extracellular matrix. The protein localises to the extracellular exosome. Its subcellular location is the mitochondrion. It localises to the mitochondrion intermembrane space. The protein resides in the mitochondrion inner membrane. It is found in the mitochondrion outer membrane. The protein localises to the rough endoplasmic reticulum. Its subcellular location is the cell projection. It localises to the cilium. The protein resides in the endoplasmic reticulum. Functionally, secreted glycoprotein regulating the activation of different signaling pathways in adjacent cells to control different processes including cell adhesion, cell-matrix adhesion, cytoskeleton organization and cell migration. Promotes substrate adhesion, spreading and formation of focal contacts. Negatively regulates cell-matrix adhesion and stress fiber assembly through Rho protein signal transduction. Modulates the organization of actin cytoskeleton by stimulating the formation of stress fibers through interactions with components of Wnt signaling pathways. Promotes cell migration through activation of PTK2 and the downstream phosphatidylinositol 3-kinase signaling. Plays a role in bone formation and promotes osteoblast differentiation in a dose-dependent manner through mitogen-activated protein kinase signaling. Mediates myelination in the peripheral nervous system through ERBB2/ERBB3 signaling. Plays a role as a regulator of muscle hypertrophy through the components of dystrophin-associated protein complex. Involved in positive regulation of mitochondrial depolarization. Plays a role in neurite outgrowth. May participate in the obstruction of fluid outflow in the trabecular meshwork. This is Myocilin (Myoc) from Rattus norvegicus (Rat).